The following is a 292-amino-acid chain: Pantothenate synthetase (292 aa).

Residue 30 to 37 (MGFLHIGH) coordinates ATP. H37 acts as the Proton donor in catalysis. A (R)-pantoate-binding site is contributed by Q61. Position 61 (Q61) interacts with beta-alanine. 147 to 150 (GEKD) is a binding site for ATP. Q153 contributes to the (R)-pantoate binding site. ATP is bound by residues V176 and 184–187 (CSSR).

It belongs to the pantothenate synthetase family. As to quaternary structure, homodimer.

Its subcellular location is the cytoplasm. The catalysed reaction is (R)-pantoate + beta-alanine + ATP = (R)-pantothenate + AMP + diphosphate + H(+). It participates in cofactor biosynthesis; (R)-pantothenate biosynthesis; (R)-pantothenate from (R)-pantoate and beta-alanine: step 1/1. In terms of biological role, catalyzes the condensation of pantoate with beta-alanine in an ATP-dependent reaction via a pantoyl-adenylate intermediate. In Agrobacterium fabrum (strain C58 / ATCC 33970) (Agrobacterium tumefaciens (strain C58)), this protein is Pantothenate synthetase.